The sequence spans 232 residues: Protein fmp52-1, mitochondrial (232 aa).

A mitochondrion-targeting transit peptide spans 1–36 (MASVALIGCTGMVGSHILTSLLAHPSVARVDTISRR).

The protein belongs to the FMP52 family.

It is found in the mitochondrion outer membrane. In Aspergillus terreus (strain NIH 2624 / FGSC A1156), this protein is Protein fmp52-1, mitochondrial (fmp521).